The sequence spans 248 residues: Cytochrome c oxidase subunit 2 (248 aa).

Residues 1–43 (MTNLLNNWLIINQFGYDLPEPWQLGLQDAAHPVMEEIIFFHDQ) are Mitochondrial intermembrane-facing. A helical membrane pass occupies residues 44 to 65 (VMFILIIIITTVLWLIVKALSG). The Mitochondrial matrix segment spans residues 66–79 (KAYHRYLVDGTLLE). A helical membrane pass occupies residues 80 to 99 (IIWTIVPAIILILIAFPSLK). The Mitochondrial intermembrane portion of the chain corresponds to 100–248 (LLYLMDEVMD…INWVLSGSDE (149 aa)). Cu cation-binding residues include histidine 180, cysteine 215, glutamate 217, cysteine 219, histidine 223, and methionine 226. Mg(2+) is bound at residue glutamate 217.

It belongs to the cytochrome c oxidase subunit 2 family. In terms of assembly, component of the cytochrome c oxidase (complex IV, CIV), a multisubunit enzyme composed of a catalytic core of 3 subunits and several supernumerary subunits. The complex exists as a monomer or a dimer and forms supercomplexes (SCs) in the inner mitochondrial membrane with ubiquinol-cytochrome c oxidoreductase (cytochrome b-c1 complex, complex III, CIII). The cofactor is Cu cation.

It localises to the mitochondrion inner membrane. It carries out the reaction 4 Fe(II)-[cytochrome c] + O2 + 8 H(+)(in) = 4 Fe(III)-[cytochrome c] + 2 H2O + 4 H(+)(out). Its function is as follows. Component of the cytochrome c oxidase, the last enzyme in the mitochondrial electron transport chain which drives oxidative phosphorylation. The respiratory chain contains 3 multisubunit complexes succinate dehydrogenase (complex II, CII), ubiquinol-cytochrome c oxidoreductase (cytochrome b-c1 complex, complex III, CIII) and cytochrome c oxidase (complex IV, CIV), that cooperate to transfer electrons derived from NADH and succinate to molecular oxygen, creating an electrochemical gradient over the inner membrane that drives transmembrane transport and the ATP synthase. Cytochrome c oxidase is the component of the respiratory chain that catalyzes the reduction of oxygen to water. Electrons originating from reduced cytochrome c in the intermembrane space (IMS) are transferred via the dinuclear copper A center (CU(A)) of subunit 2 and heme A of subunit 1 to the active site in subunit 1, a binuclear center (BNC) formed by heme A3 and copper B (CU(B)). The BNC reduces molecular oxygen to 2 water molecules using 4 electrons from cytochrome c in the IMS and 4 protons from the mitochondrial matrix. This chain is Cytochrome c oxidase subunit 2 (COII), found in Metridium senile (Brown sea anemone).